The following is a 509-amino-acid chain: Putative cytochrome P450 CYP13A8 (509 aa).

Residue Cys-455 participates in heme binding.

The protein belongs to the cytochrome P450 family. Heme is required as a cofactor.

In terms of biological role, cytochromes P450 are a group of heme-thiolate monooxygenases. They oxidize a variety of structurally unrelated compounds, including steroids, fatty acids, and xenobiotics. This is Putative cytochrome P450 CYP13A8 (cyp-13A8) from Caenorhabditis elegans.